Consider the following 396-residue polypeptide: Elongation factor Tu (396 aa).

In terms of domain architecture, tr-type G spans 10-206 (KEHVNIGTIG…AVDTWIETPV (197 aa)). The G1 stretch occupies residues 19–26 (GHVDHGKT). GTP is bound at residue 19–26 (GHVDHGKT). Position 26 (T26) interacts with Mg(2+). A G2 region spans residues 60-64 (GITIN). The G3 stretch occupies residues 81–84 (DCPG). Residues 81–85 (DCPGH) and 136–139 (NKCD) contribute to the GTP site. Positions 136-139 (NKCD) are G4. The tract at residues 176–178 (SAL) is G5.

It belongs to the TRAFAC class translation factor GTPase superfamily. Classic translation factor GTPase family. EF-Tu/EF-1A subfamily. In terms of assembly, monomer.

The protein resides in the cytoplasm. It carries out the reaction GTP + H2O = GDP + phosphate + H(+). GTP hydrolase that promotes the GTP-dependent binding of aminoacyl-tRNA to the A-site of ribosomes during protein biosynthesis. This Mycoplasmopsis agalactiae (strain NCTC 10123 / CIP 59.7 / PG2) (Mycoplasma agalactiae) protein is Elongation factor Tu.